A 327-amino-acid chain; its full sequence is Movement protein (327 aa).

Residues 297–327 are a coiled coil; that stretch reads SASSSNTENELARVSQNIDLLKNKLKEICGE.

The protein belongs to the caulimoviridae movement protein family. Homotrimer, through the coiled-coil domain. Interacts with VAP. May interact (via N-terminus) with host prenylated Rab acceptor protein 1D (PRA1D).

The protein localises to the host cell junction. Its subcellular location is the host plasmodesma. Its function is as follows. Transports viral genome to neighboring plant cells directly through plasmosdesmata, without any budding. The movement protein allows efficient cell to cell propagation, by bypassing the host cell wall barrier. Acts by forming tubules structures that increase the size exclusion limit (SEL) of plasmodesmata, thereby allowing viral ribonucleocapsids to spread directly to neighboring cells. In Cauliflower mosaic virus (strain Strasbourg) (CaMV), this protein is Movement protein.